A 59-amino-acid polypeptide reads, in one-letter code: MKAFYGILIIFILISMIDLSKQVFINAKCRGSPECLPKCKEAIGKAAGKCMNGKCKCYP.

An N-terminal signal peptide occupies residues 1 to 22 (MKAFYGILIIFILISMIDLSKQ). 3 disulfide bridges follow: cysteine 29–cysteine 50, cysteine 35–cysteine 55, and cysteine 39–cysteine 57. The interval 48 to 55 (GKCMNGKC) is interaction with Ca(2+)-activated K(+) channels.

It belongs to the short scorpion toxin superfamily. Potassium channel inhibitor family. Alpha-KTx 04 subfamily. As to expression, expressed by the venom gland.

It localises to the secreted. Its function is as follows. Potently blocks Kv1.1/KCNA1 (85%), Kv1.2/KCNA2 (91%), Kv1.3/KCNA3 (89%), Kv1.6/KCNA6 (94%), and Shaker (97%). The chain is Potassium channel toxin alpha-KTx 4.1 from Tityus serrulatus (Brazilian scorpion).